Here is a 140-residue protein sequence, read N- to C-terminus: Coiled-coil domain-containing protein 126 (140 aa).

An N-terminal signal peptide occupies residues 1 to 26 (MFFTISRKNMSQKLSLLLLVFGLIWG). 2 N-linked (GlcNAc...) asparagine glycosylation sites follow: N110 and N134. Positions 120-140 (TSGNLVPVTTNKRTNVSGSIR) are disordered.

It localises to the secreted. This chain is Coiled-coil domain-containing protein 126 (CCDC126), found in Homo sapiens (Human).